Reading from the N-terminus, the 277-residue chain is MNTDARMGAGVSLKAEHYDQALACNLEGLWFEVHPENYMVGGPRLAWLNRIAERHPVSLHGVALSLAADAAPDQDHLQRLRALCDQIEPVLVSEHLAWSTWQGHYHPDLLPFPRSNEALQRIAENIQRCQEVLGRRISIENPSHYLQLQGHEWDEIDFLGELTRRTGCGLLLDINNVYVSAHNLGFSATAYLDRFPAQAITEVHLAGHSDDDQGSLLIDSHDAQVAEPVWALYRKLVSRVGPRPTLIERDDKLPPFTELLAERSIAQSIMTCPGVLP.

It belongs to the UPF0276 family.

This is UPF0276 protein PP_0992 from Pseudomonas putida (strain ATCC 47054 / DSM 6125 / CFBP 8728 / NCIMB 11950 / KT2440).